Consider the following 276-residue polypeptide: 3-methyl-2-oxobutanoate hydroxymethyltransferase (276 aa).

D45 and D84 together coordinate Mg(2+). 3-methyl-2-oxobutanoate contacts are provided by residues 45 to 46 (DS), D84, and K114. E116 lines the Mg(2+) pocket. E183 (proton acceptor) is an active-site residue.

The protein belongs to the PanB family. In terms of assembly, homodecamer; pentamer of dimers. Mg(2+) serves as cofactor.

The protein resides in the cytoplasm. The catalysed reaction is 3-methyl-2-oxobutanoate + (6R)-5,10-methylene-5,6,7,8-tetrahydrofolate + H2O = 2-dehydropantoate + (6S)-5,6,7,8-tetrahydrofolate. It participates in cofactor biosynthesis; (R)-pantothenate biosynthesis; (R)-pantoate from 3-methyl-2-oxobutanoate: step 1/2. Its function is as follows. Catalyzes the reversible reaction in which hydroxymethyl group from 5,10-methylenetetrahydrofolate is transferred onto alpha-ketoisovalerate to form ketopantoate. The polypeptide is 3-methyl-2-oxobutanoate hydroxymethyltransferase (Carboxydothermus hydrogenoformans (strain ATCC BAA-161 / DSM 6008 / Z-2901)).